We begin with the raw amino-acid sequence, 329 residues long: Microtubule-associated protein RP/EB family member 1C (329 aa).

The Calponin-homology (CH) domain occupies 13–115; the sequence is FVGRSEILAW…FMQWMKKYCD (103 aa). The span at 130–141 shows a compositional bias: basic and acidic residues; the sequence is REASKGGKEATK. The disordered stretch occupies residues 130 to 203; that stretch reads REASKGGKEA…SAKQSKPVPA (74 aa). Residues 174-185 show a composition bias toward low complexity; the sequence is SNNTGTHHSSTG. An EB1 C-terminal domain is found at 193-263; it reads PSAKQSKPVP…LYAADGEDVG (71 aa). The interval 289 to 311 is required for nuclear localization; sequence KRKLIVNLDVDVAAITTLSPRQR.

Belongs to the MAPRE family. Homodimer. As to expression, highly expressed in the root and shoot meristems, in guard cells of leaf stomata, pollen grains and pollen tubes.

The protein resides in the nucleus. It is found in the cytoplasm. It localises to the cytoskeleton. Its subcellular location is the spindle. The protein localises to the phragmoplast. Functionally, plant-specific EB1 subtype that functions preferentially at early stages of plant mitosis by regulating spindle positioning and chromosome segregation. Accumulates in the prophase nucleus and is required to maintain spindle bipolarity during premetaphase and/or metaphase and for efficient segregation of chromosomes at anaphase. May play a role in the dynamics of microtubule network in elongating pollen tubes. This is Microtubule-associated protein RP/EB family member 1C (EB1C) from Arabidopsis thaliana (Mouse-ear cress).